The sequence spans 59 residues: Large ribosomal subunit protein bL32 (59 aa).

The protein belongs to the bacterial ribosomal protein bL32 family.

The polypeptide is Large ribosomal subunit protein bL32 (Anaeromyxobacter dehalogenans (strain 2CP-C)).